Here is a 31-residue protein sequence, read N- to C-terminus: Photosystem II reaction center protein T (31 aa).

The chain crosses the membrane as a helical span at residues 3–23 (ALVYTFLLVGTLGIIFFSIFF).

It belongs to the PsbT family. In terms of assembly, PSII is composed of 1 copy each of membrane proteins PsbA, PsbB, PsbC, PsbD, PsbE, PsbF, PsbH, PsbI, PsbJ, PsbK, PsbL, PsbM, PsbT, PsbY, PsbZ, Psb30/Ycf12, at least 3 peripheral proteins of the oxygen-evolving complex and a large number of cofactors. It forms dimeric complexes.

It is found in the plastid. It localises to the chloroplast thylakoid membrane. Found at the monomer-monomer interface of the photosystem II (PS II) dimer, plays a role in assembly and dimerization of PSII. PSII is a light-driven water plastoquinone oxidoreductase, using light energy to abstract electrons from H(2)O, generating a proton gradient subsequently used for ATP formation. This is Photosystem II reaction center protein T from Bigelowiella natans (Pedinomonas minutissima).